Reading from the N-terminus, the 308-residue chain is tRNA pseudouridine synthase B (308 aa).

D47 serves as the catalytic Nucleophile.

The protein belongs to the pseudouridine synthase TruB family. Type 1 subfamily.

The catalysed reaction is uridine(55) in tRNA = pseudouridine(55) in tRNA. Functionally, responsible for synthesis of pseudouridine from uracil-55 in the psi GC loop of transfer RNAs. This chain is tRNA pseudouridine synthase B, found in Xanthomonas campestris pv. campestris (strain B100).